A 376-amino-acid chain; its full sequence is uncharacterized protein (376 aa).

A signal peptide spans 1 to 31 (MSRHKVYKAISSYVIIAIIIIAIVAVVGVLL). Residues 37–57 (SSSSVTSTTTPTTSSSVSPSS) are disordered.

Belongs to the bacterial solute-binding protein 1 family. WtpA subfamily.

This is an uncharacterized protein from Sulfurisphaera tokodaii (strain DSM 16993 / JCM 10545 / NBRC 100140 / 7) (Sulfolobus tokodaii).